Reading from the N-terminus, the 649-residue chain is PTS system mannitol-specific EIICBA component (649 aa).

The 330-residue stretch at 13 to 342 (FGRFLSNMVM…LLMKAQTSTE (330 aa)) folds into the PTS EIIC type-2 domain. 6 helical membrane-spanning segments follow: residues 25-46 (IGAF…WVPN), 51-71 (SLVG…TGGK), 135-156 (SAGI…PFVK), 166-186 (VNFL…EPAK), 274-293 (AIAG…AGLV), and 314-335 (LGVV…ALLM). Residues 384 to 475 (QSIIVACDAG…LVTQLLAAKR (92 aa)) form the PTS EIIB type-2 domain. Cys-390 acts as the Phosphocysteine intermediate; for EIIB activity in catalysis. Cys-390 is subject to Phosphocysteine; by EIIA. Positions 504–646 (FQLQKENIHL…SDVLSILATS (143 aa)) constitute a PTS EIIA type-2 domain. His-564 serves as the catalytic Tele-phosphohistidine intermediate; for EIIA activity. His-564 is modified (phosphohistidine; by HPr).

Homodimer. An intramolecular phosphotransfer takes places between His-564 and Cys-390.

The protein localises to the cell inner membrane. The enzyme catalyses D-mannitol(out) + N(pros)-phospho-L-histidyl-[protein] = D-mannitol 1-phosphate(in) + L-histidyl-[protein]. The phosphoenolpyruvate-dependent sugar phosphotransferase system (sugar PTS), a major carbohydrate active transport system, catalyzes the phosphorylation of incoming sugar substrates concomitantly with their translocation across the cell membrane. This system is involved in D-mannitol transport. The sequence is that of PTS system mannitol-specific EIICBA component (mtlA) from Vibrio cholerae serotype O1 (strain ATCC 39315 / El Tor Inaba N16961).